The sequence spans 296 residues: Regulatory protein PchR (296 aa).

The region spanning 201-296 (HAARDLLVGA…RYGISPSEIR (96 aa)) is the HTH araC/xylS-type domain. DNA-binding regions (H-T-H motif) lie at residues 218–239 (DTLA…RKVF) and 266–288 (VSTV…RKRY).

In terms of biological role, positive activator of the genes for pyochelin and ferripyochelin receptors. The protein is Regulatory protein PchR (pchR) of Pseudomonas aeruginosa (strain ATCC 15692 / DSM 22644 / CIP 104116 / JCM 14847 / LMG 12228 / 1C / PRS 101 / PAO1).